The primary structure comprises 45 residues: Sperm-specific protein Phi-3 (45 aa).

Residues 1–45 (AKAKRSPRKKKAAVKKSSKSKAKKPKSPKKKKAAKKPAKKAAKKK) form a disordered region.

It is found in the nucleus. The protein resides in the chromosome. In terms of biological role, involved in nuclear basic protein transition: histones are replaced by spermatid specific proteins which are themselves replaced by protamines in late spermatids. In Mytilus californianus (California mussel), this protein is Sperm-specific protein Phi-3.